The chain runs to 126 residues: Histone H2B type 2-E (126 aa).

The segment covering 1 to 12 (MPEPAKSAPAPK) has biased composition (low complexity). The tract at residues 1 to 32 (MPEPAKSAPAPKKGSKKAVTKAQKKDGKKRKR) is disordered. Residue proline 2 is modified to N-acetylproline. Glutamate 3 carries the ADP-ribosyl glutamic acid modification. The residue at position 6 (lysine 6) is an N6-(2-hydroxyisobutyryl)lysine; alternate. Lysine 6 carries the post-translational modification N6-(beta-hydroxybutyryl)lysine; alternate. Lysine 6 carries the N6-acetyllysine; alternate modification. At lysine 6 the chain carries N6-butyryllysine; alternate. At lysine 6 the chain carries N6-crotonyllysine; alternate. An N6-lactoyllysine; alternate modification is found at lysine 6. Lysine 6 participates in a covalent cross-link: Glycyl lysine isopeptide (Lys-Gly) (interchain with G-Cter in SUMO2); alternate. The residue at position 7 (serine 7) is an ADP-ribosylserine. Lysine 12 is modified (N6-(beta-hydroxybutyryl)lysine; alternate). Residues lysine 12 and lysine 13 each carry the N6-acetyllysine; alternate modification. N6-crotonyllysine; alternate occurs at positions 12 and 13. The residue at position 12 (lysine 12) is an N6-lactoyllysine; alternate. Lysine 13 bears the N6-(2-hydroxyisobutyryl)lysine; alternate mark. Serine 15 is subject to Phosphoserine; by STK4/MST1. Lysine 16, lysine 17, lysine 21, and lysine 24 each carry N6-acetyllysine; alternate. N6-crotonyllysine; alternate is present on residues lysine 16, lysine 17, lysine 21, and lysine 24. Residues lysine 16, lysine 17, lysine 21, and lysine 24 each carry the N6-lactoyllysine; alternate modification. Lysine 17 is subject to N6-glutaryllysine; alternate. An N6-(2-hydroxyisobutyryl)lysine; alternate mark is found at lysine 21 and lysine 24. Position 21 is an N6-(beta-hydroxybutyryl)lysine; alternate (lysine 21). Lysine 21 is subject to N6-butyryllysine; alternate. Lysine 21 is covalently cross-linked (Glycyl lysine isopeptide (Lys-Gly) (interchain with G-Cter in SUMO2); alternate). Lysine 25 is modified (N6-(2-hydroxyisobutyryl)lysine). Position 35 is an N6-(2-hydroxyisobutyryl)lysine; alternate (lysine 35). Lysine 35 is subject to N6-(beta-hydroxybutyryl)lysine; alternate. An N6-crotonyllysine; alternate modification is found at lysine 35. The residue at position 35 (lysine 35) is an N6-glutaryllysine; alternate. N6-succinyllysine; alternate is present on lysine 35. Residue lysine 35 forms a Glycyl lysine isopeptide (Lys-Gly) (interchain with G-Cter in ubiquitin); alternate linkage. Residue glutamate 36 is modified to PolyADP-ribosyl glutamic acid. Residue serine 37 is modified to Phosphoserine; by AMPK. N6-(2-hydroxyisobutyryl)lysine; alternate is present on residues lysine 44, lysine 47, and lysine 58. Residue lysine 44 is modified to N6-lactoyllysine; alternate. N6-glutaryllysine; alternate occurs at positions 44 and 47. Lysine 47 bears the N6-methyllysine; alternate mark. Lysine 58 bears the N6,N6-dimethyllysine; alternate mark. Arginine 80 is subject to Dimethylated arginine. The residue at position 86 (lysine 86) is an N6-(2-hydroxyisobutyryl)lysine; alternate. Lysine 86 is modified (N6-acetyllysine; alternate). Lysine 86 carries the post-translational modification N6-lactoyllysine; alternate. An N6,N6,N6-trimethyllysine; alternate modification is found at lysine 86. An omega-N-methylarginine mark is found at arginine 87 and arginine 93. N6-(2-hydroxyisobutyryl)lysine; alternate is present on lysine 109. An N6-lactoyllysine; alternate modification is found at lysine 109. An N6-glutaryllysine; alternate modification is found at lysine 109. Lysine 109 carries the post-translational modification N6-methyllysine; alternate. O-linked (GlcNAc) serine glycosylation occurs at serine 113. Phosphothreonine is present on threonine 116. N6-(2-hydroxyisobutyryl)lysine; alternate is present on residues lysine 117 and lysine 121. Lysine 117 is modified (N6-(beta-hydroxybutyryl)lysine; alternate). 2 positions are modified to N6-lactoyllysine; alternate: lysine 117 and lysine 121. Lysine 117 and lysine 121 each carry N6-glutaryllysine; alternate. An N6-succinyllysine; alternate mark is found at lysine 117 and lysine 121. At lysine 117 the chain carries N6-methylated lysine; alternate. Residue lysine 121 forms a Glycyl lysine isopeptide (Lys-Gly) (interchain with G-Cter in ubiquitin); alternate linkage.

Belongs to the histone H2B family. In terms of assembly, the nucleosome is a histone octamer containing two molecules each of H2A, H2B, H3 and H4 assembled in one H3-H4 heterotetramer and two H2A-H2B heterodimers. The octamer wraps approximately 147 bp of DNA. In terms of processing, monoubiquitination at Lys-35 (H2BK34Ub) by the MSL1/MSL2 dimer is required for histone H3 'Lys-4' (H3K4me) and 'Lys-79' (H3K79me) methylation and transcription activation at specific gene loci, such as HOXA9 and MEIS1 loci. Similarly, monoubiquitination at Lys-121 (H2BK120Ub) by the RNF20/40 complex gives a specific tag for epigenetic transcriptional activation and is also prerequisite for histone H3 'Lys-4' and 'Lys-79' methylation. It also functions cooperatively with the FACT dimer to stimulate elongation by RNA polymerase II. H2BK120Ub also acts as a regulator of mRNA splicing: deubiquitination by USP49 is required for efficient cotranscriptional splicing of a large set of exons. Phosphorylated on Ser-15 (H2BS14ph) by STK4/MST1 during apoptosis; which facilitates apoptotic chromatin condensation. Also phosphorylated on Ser-15 in response to DNA double strand breaks (DSBs), and in correlation with somatic hypermutation and immunoglobulin class-switch recombination. Phosphorylation at Ser-37 (H2BS36ph) by AMPK in response to stress promotes transcription. Post-translationally, ADP-ribosylated by PARP1 or PARP2 on Ser-7 (H2BS6ADPr) in response to DNA damage. H2BS6ADPr promotes recruitment of CHD1L. Mono-ADP-ribosylated on Glu-3 (H2BE2ADPr) by PARP3 in response to single-strand breaks. Poly ADP-ribosylation on Glu-36 (H2BE35ADPr) by PARP1 regulates adipogenesis: it inhibits phosphorylation at Ser-37 (H2BS36ph), thereby blocking expression of pro-adipogenetic genes. In terms of processing, crotonylation (Kcr) is specifically present in male germ cells and marks testis-specific genes in post-meiotic cells, including X-linked genes that escape sex chromosome inactivation in haploid cells. Crotonylation marks active promoters and enhancers and confers resistance to transcriptional repressors. It is also associated with post-meiotically activated genes on autosomes. GlcNAcylation at Ser-113 promotes monoubiquitination of Lys-121. It fluctuates in response to extracellular glucose, and associates with transcribed genes. Post-translationally, lactylated in macrophages by EP300/P300 by using lactoyl-CoA directly derived from endogenous or exogenous lactate, leading to stimulates gene transcription.

The protein localises to the nucleus. It is found in the chromosome. Functionally, core component of nucleosome. Nucleosomes wrap and compact DNA into chromatin, limiting DNA accessibility to the cellular machineries which require DNA as a template. Histones thereby play a central role in transcription regulation, DNA repair, DNA replication and chromosomal stability. DNA accessibility is regulated via a complex set of post-translational modifications of histones, also called histone code, and nucleosome remodeling. In terms of biological role, has broad antibacterial activity. May contribute to the formation of the functional antimicrobial barrier of the colonic epithelium, and to the bactericidal activity of amniotic fluid. The chain is Histone H2B type 2-E from Pongo abelii (Sumatran orangutan).